Reading from the N-terminus, the 330-residue chain is Methionyl-tRNA formyltransferase (330 aa).

121 to 124 (SLLP) is a (6S)-5,6,7,8-tetrahydrofolate binding site.

The protein belongs to the Fmt family.

It carries out the reaction L-methionyl-tRNA(fMet) + (6R)-10-formyltetrahydrofolate = N-formyl-L-methionyl-tRNA(fMet) + (6S)-5,6,7,8-tetrahydrofolate + H(+). Functionally, attaches a formyl group to the free amino group of methionyl-tRNA(fMet). The formyl group appears to play a dual role in the initiator identity of N-formylmethionyl-tRNA by promoting its recognition by IF2 and preventing the misappropriation of this tRNA by the elongation apparatus. The chain is Methionyl-tRNA formyltransferase from Burkholderia orbicola (strain MC0-3).